We begin with the raw amino-acid sequence, 579 residues long: Nuclear receptor subfamily 1 group D member 2 (579 aa).

Residues 1–60 (MEVNAGGVIAYISSSSSASSPASCHSEGSENSFQSSSSSVPSSPNSSNSDTNGNPKNGDL) form a required for phosphorylation by CSNK1E and cytoplasmic localization region. Positions 1-99 (MEVNAGGVIA…HSGVTKFSGM (99 aa)) are modulating. Low complexity predominate over residues 13–54 (SSSSSASSPASCHSEGSENSFQSSSSSVPSSPNSSNSDTNGN). Residues 13–61 (SSSSSASSPASCHSEGSENSFQSSSSSVPSSPNSSNSDTNGNPKNGDLA) form a disordered region. Ser-46 carries the phosphoserine; by GSK3-beta modification. Positions 100–176 (VLLCKVCGDV…VGMSRDAVRF (77 aa)) form a DNA-binding region, nuclear receptor. 2 consecutive NR C4-type zinc fingers follow at residues 103–123 (CKVC…CEGC) and 140–164 (CLKN…FKKC). Residues Lys-162 and Lys-163 each carry the N6-acetyllysine; by KAT5 modification. The disordered stretch occupies residues 222–250 (PAQEQLRPKPQLEQENIKSSSPPSSDFAK). The span at 227–237 (LRPKPQLEQEN) shows a compositional bias: basic and acidic residues. 2 disulfides stabilise this stretch: Cys-337-Cys-343 and Cys-374-Cys-384. The NR LBD domain occupies 369 to 579 (KNSYLCNTGG…EELLAFKVHP (211 aa)). Heme contacts are provided by Cys-384 and His-568. Residues 397 to 579 (SGHEIWEEFS…EELLAFKVHP (183 aa)) form an interaction with ZNHIT1 region.

Belongs to the nuclear hormone receptor family. NR1 subfamily. In terms of assembly, binds DNA as a monomer or a homodimer. Interacts with NCOA5 coactivator, leading to a strong increase of transcription of target genes. Interacts (via N-terminus) with KAT5. Interacts (via C-terminus) with HDAC1. Interacts with ZNHIT1. Interacts with SIAH2. In terms of processing, deacetylated by HDAC1. Acetylation and deacetylation regulate its transcriptional regulatory activity. Under more reducing intracellular redox conditions, Cys-384 is in its heme-bound state, which is optimal for recruitment of the NCOR1/HDAC3 corepressor complex and repression of target genes. When subjected to oxidative stress conditions, Cys-384 undergoes oxidation to form a disulfide bridge with Cys-374, also triggering a ligand switch that results in release of bound heme and derepression of target genes. Post-translationally, ubiquitinated by SIAH2; leading to proteasomal degradation. In terms of processing, phosphorylated by CSNK1E; phosphorylation enhances its cytoplasmic localization. Widely expressed. Expressed at high levels in the liver, adipose tissue, skeletal muscle and brain. Expression oscillates diurnally in the suprachiasmatic nucleus (SCN) of the hypothalamus as well as in peripheral tissues.

The protein resides in the nucleus. Its subcellular location is the cytoplasm. The heme-bound form can bind gaseous signaling molecules such as CO and nitric oxide (NO) and NO can reverse its transcriptional repressor activity. In terms of biological role, transcriptional repressor which coordinates circadian rhythm and metabolic pathways in a heme-dependent manner. Integral component of the complex transcription machinery that governs circadian rhythmicity and forms a critical negative limb of the circadian clock by directly repressing the expression of core clock components BMAL1 and CLOCK. Also regulates genes involved in metabolic functions, including lipid metabolism and the inflammatory response. Acts as a receptor for heme which stimulates its interaction with the NCOR1/HDAC3 corepressor complex, enhancing transcriptional repression. Recognizes two classes of DNA response elements within the promoter of its target genes and can bind to DNA as either monomers or homodimers, depending on the nature of the response element. Binds as a monomer to a response element composed of the consensus half-site motif 5'-[A/G]GGTCA-3' preceded by an A/T-rich 5' sequence (RevRE), or as a homodimer to a direct repeat of the core motif spaced by two nuclegotides (RevDR-2). Acts as a potent competitive repressor of ROR alpha (RORA) function and also negatively regulates the expression of NR1D1. Regulates lipid and energy homeostasis in the skeletal muscle via repression of genes involved in lipid metabolism and myogenesis including: CD36, FABP3, FABP4, UCP3, SCD1 and MSTN. Regulates hepatic lipid metabolism via the repression of APOC3. Represses gene expression at a distance in macrophages by inhibiting the transcription of enhancer-derived RNAs (eRNAs). In addition to its activity as a repressor, can also act as a transcriptional activator. Acts as a transcriptional activator of the sterol regulatory element-binding protein 1 (SREBF1) and the inflammatory mediator interleukin-6 (IL6) in the skeletal muscle. Plays a role in the regulation of circadian sleep/wake cycle; essential for maintaining wakefulness during the dark phase or active period. Key regulator of skeletal muscle mitochondrial function; negatively regulates the skeletal muscle expression of core clock genes and genes involved in mitochondrial biogenesis, fatty acid beta-oxidation and lipid metabolism. May play a role in the circadian control of neutrophilic inflammation in the lung. The chain is Nuclear receptor subfamily 1 group D member 2 from Homo sapiens (Human).